The chain runs to 147 residues: Siroheme decarboxylase NirG subunit (147 aa).

Belongs to the Ahb/Nir family. As to quaternary structure, probably forms a complex composed of NirD, NirL, NirG and NirH. All proteins are required for the total conversion of siroheme to didecarboxysiroheme.

The enzyme catalyses siroheme + 2 H(+) = 12,18-didecarboxysiroheme + 2 CO2. It functions in the pathway porphyrin-containing compound metabolism. Functionally, involved in heme d1 biosynthesis. Catalyzes the decarboxylation of siroheme into didecarboxysiroheme. In Stutzerimonas stutzeri (Pseudomonas stutzeri), this protein is Siroheme decarboxylase NirG subunit.